Here is a 428-residue protein sequence, read N- to C-terminus: Elongation factor 1-alpha (428 aa).

One can recognise a tr-type G domain in the interval 5 to 217 (KPHVNIVFIG…DQIPEPEKPV (213 aa)). Positions 14 to 21 (GHVDHGKS) are G1. Residue 14–21 (GHVDHGKS) participates in GTP binding. S21 contacts Mg(2+). Positions 68–72 (GITID) are G2. Positions 89–92 (DAPG) are G3. GTP contacts are provided by residues 89 to 93 (DAPGH) and 144 to 147 (NKMD). The tract at residues 144–147 (NKMD) is G4. Positions 181-183 (SAW) are G5.

Belongs to the TRAFAC class translation factor GTPase superfamily. Classic translation factor GTPase family. EF-Tu/EF-1A subfamily.

It is found in the cytoplasm. It catalyses the reaction GTP + H2O = GDP + phosphate + H(+). In terms of biological role, GTP hydrolase that promotes the GTP-dependent binding of aminoacyl-tRNA to the A-site of ribosomes during protein biosynthesis. This is Elongation factor 1-alpha from Pyrococcus furiosus (strain ATCC 43587 / DSM 3638 / JCM 8422 / Vc1).